Here is a 200-residue protein sequence, read N- to C-terminus: 7-methyl-GTP pyrophosphatase (200 aa).

Aspartate 69 serves as the catalytic Proton acceptor.

The protein belongs to the Maf family. YceF subfamily. A divalent metal cation is required as a cofactor.

The protein resides in the cytoplasm. The catalysed reaction is N(7)-methyl-GTP + H2O = N(7)-methyl-GMP + diphosphate + H(+). In terms of biological role, nucleoside triphosphate pyrophosphatase that hydrolyzes 7-methyl-GTP (m(7)GTP). May have a dual role in cell division arrest and in preventing the incorporation of modified nucleotides into cellular nucleic acids. This Colwellia psychrerythraea (strain 34H / ATCC BAA-681) (Vibrio psychroerythus) protein is 7-methyl-GTP pyrophosphatase.